Consider the following 474-residue polypeptide: 6-phospho-beta-galactosidase (474 aa).

D-galactose 6-phosphate-binding residues include glutamine 19, histidine 116, asparagine 159, glutamate 160, and asparagine 297. Glutamate 160 acts as the Proton donor in catalysis. Glutamate 375 serves as the catalytic Nucleophile. Residues serine 433, tryptophan 434, lysine 440, and tyrosine 442 each coordinate D-galactose 6-phosphate.

The protein belongs to the glycosyl hydrolase 1 family.

It catalyses the reaction a 6-phospho-beta-D-galactoside + H2O = D-galactose 6-phosphate + an alcohol. It functions in the pathway carbohydrate metabolism; lactose degradation; D-galactose 6-phosphate and beta-D-glucose from lactose 6-phosphate: step 1/1. The polypeptide is 6-phospho-beta-galactosidase (Lacticaseibacillus casei (Lactobacillus casei)).